An 83-amino-acid polypeptide reads, in one-letter code: Hepcidin-2 (83 aa).

A signal peptide spans 1–26; it reads MALSTRTQAACLLLLLLASLSSTTYL. Residues 27–53 constitute a propeptide that is removed on maturation; sequence QQQMRQTTELQPLHGEESRADIAIPMQ. Cystine bridges form between Cys65/Cys81, Cys68/Cys71, Cys69/Cys77, and Cys72/Cys80.

Belongs to the hepcidin family. Highly expressed in the liver and to a much lesser extent in the heart. Also expressed in pancreas.

It is found in the secreted. In terms of biological role, seems to act as a signaling molecule involved in the maintenance of iron homeostasis. This Mus musculus (Mouse) protein is Hepcidin-2 (Hamp2).